The primary structure comprises 275 residues: Echotoxin-2 (275 aa).

A signal peptide spans 1-23; the sequence is MKRNILALVVVVALISQSRPAES. The plays an important role in the hemolytic activity stretch occupies residues 23-32; sequence SAGGTIIATL. The tract at residues 49–67 is N-terminal region; the sequence is ETGASVASAAAAATSSDYS. Phosphocholine contacts are provided by Gly-123, Ser-141, Pro-143, Tyr-176, and Tyr-177. Residues 141 to 156 are trp-rich region, which is important for the binding to lipid membrane; it reads SAPYNFDFYSNWLAVG. Positions 249-275 are excised as a propeptide; that stretch reads RAIQQELARRAEEEKQRKRKALDEMLK.

The protein belongs to the actinoporin family. Sea anemone subfamily. Octamer or nonamer in membranes. Monomer in the soluble state. In terms of tissue distribution, salivary gland.

Its subcellular location is the secreted. It is found in the nematocyst. The protein localises to the target cell membrane. Functionally, pore-forming protein that forms cations-selective hydrophilic pores of around 1 nm and causes cardiac stimulation and cytolysis. Pore formation is a multi-step process that involves specific recognition of membrane sphingomyelin (but neither cholesterol nor phosphatidylcholine) using aromatic rich region and adjacent phosphocholine (POC) binding site, firm binding to the membrane (mainly driven by hydrophobic interactions) accompanied by the transfer of the N-terminal region to the lipid-water interface and finally pore formation after oligomerization of monomers. Exhibits both hemolytic and lethal activities. Gangliosides potently inhibits the hemolytic activity. The chain is Echotoxin-2 from Monoplex parthenopeus (Giant triton).